The primary structure comprises 78 residues: uncharacterized protein (78 aa).

This is an uncharacterized protein from Saccharomyces cerevisiae (strain ATCC 204508 / S288c) (Baker's yeast).